We begin with the raw amino-acid sequence, 442 residues long: UDP-N-acetylmuramoylalanine--D-glutamate ligase (442 aa).

Residue 113–119 (GSNGKTT) participates in ATP binding.

Belongs to the MurCDEF family.

Its subcellular location is the cytoplasm. It catalyses the reaction UDP-N-acetyl-alpha-D-muramoyl-L-alanine + D-glutamate + ATP = UDP-N-acetyl-alpha-D-muramoyl-L-alanyl-D-glutamate + ADP + phosphate + H(+). It participates in cell wall biogenesis; peptidoglycan biosynthesis. Functionally, cell wall formation. Catalyzes the addition of glutamate to the nucleotide precursor UDP-N-acetylmuramoyl-L-alanine (UMA). The protein is UDP-N-acetylmuramoylalanine--D-glutamate ligase of Coxiella burnetii (strain CbuG_Q212) (Coxiella burnetii (strain Q212)).